Consider the following 126-residue polypeptide: Small ribosomal subunit protein uS13 (126 aa).

Residues arginine 92 to lysine 126 form a disordered region. Basic residues predominate over residues glutamine 100 to lysine 126.

This sequence belongs to the universal ribosomal protein uS13 family. As to quaternary structure, part of the 30S ribosomal subunit. Forms a loose heterodimer with protein S19. Forms two bridges to the 50S subunit in the 70S ribosome.

Its function is as follows. Located at the top of the head of the 30S subunit, it contacts several helices of the 16S rRNA. In the 70S ribosome it contacts the 23S rRNA (bridge B1a) and protein L5 of the 50S subunit (bridge B1b), connecting the 2 subunits; these bridges are implicated in subunit movement. Contacts the tRNAs in the A and P-sites. The polypeptide is Small ribosomal subunit protein uS13 (Cyanothece sp. (strain PCC 7425 / ATCC 29141)).